Reading from the N-terminus, the 339-residue chain is Phenylalanine--tRNA ligase alpha subunit (339 aa).

Glu-247 is a Mg(2+) binding site.

The protein belongs to the class-II aminoacyl-tRNA synthetase family. Phe-tRNA synthetase alpha subunit type 1 subfamily. As to quaternary structure, tetramer of two alpha and two beta subunits. Mg(2+) is required as a cofactor.

It is found in the cytoplasm. It carries out the reaction tRNA(Phe) + L-phenylalanine + ATP = L-phenylalanyl-tRNA(Phe) + AMP + diphosphate + H(+). In Deinococcus radiodurans (strain ATCC 13939 / DSM 20539 / JCM 16871 / CCUG 27074 / LMG 4051 / NBRC 15346 / NCIMB 9279 / VKM B-1422 / R1), this protein is Phenylalanine--tRNA ligase alpha subunit (pheS).